Reading from the N-terminus, the 82-residue chain is Small ribosomal subunit protein eS27A (82 aa).

The segment at 37–59 (CPGCLNITTVFSHAQTAVTCESC) adopts a C4-type zinc-finger fold. Cys40 bears the S-methylcysteine mark.

It belongs to the eukaryotic ribosomal protein eS27 family. In terms of assembly, component of the small ribosomal subunit (SSU). Mature yeast ribosomes consist of a small (40S) and a large (60S) subunit. The 40S small subunit contains 1 molecule of ribosomal RNA (18S rRNA) and 33 different proteins (encoded by 57 genes). The large 60S subunit contains 3 rRNA molecules (25S, 5.8S and 5S rRNA) and 46 different proteins (encoded by 81 genes). Requires Zn(2+) as cofactor. Post-translationally, the N-terminus is not modified.

It localises to the cytoplasm. Component of the ribosome, a large ribonucleoprotein complex responsible for the synthesis of proteins in the cell. The small ribosomal subunit (SSU) binds messenger RNAs (mRNAs) and translates the encoded message by selecting cognate aminoacyl-transfer RNA (tRNA) molecules. The large subunit (LSU) contains the ribosomal catalytic site termed the peptidyl transferase center (PTC), which catalyzes the formation of peptide bonds, thereby polymerizing the amino acids delivered by tRNAs into a polypeptide chain. The nascent polypeptides leave the ribosome through a tunnel in the LSU and interact with protein factors that function in enzymatic processing, targeting, and the membrane insertion of nascent chains at the exit of the ribosomal tunnel. This chain is Small ribosomal subunit protein eS27A, found in Saccharomyces cerevisiae (strain ATCC 204508 / S288c) (Baker's yeast).